Here is a 127-residue protein sequence, read N- to C-terminus: Pleckstrin homology-like domain family A member 3 (127 aa).

In terms of domain architecture, PH spans 5–108 (KVMNDGYLEK…RFKNRVAVQT (104 aa)).

The protein belongs to the PHLDA3 family.

Its subcellular location is the cytoplasm. It is found in the membrane. Functionally, p53/tp53-regulated repressor of Akt/akt1 signaling. Represses akt1 by preventing akt1-binding to membrane lipids, thereby inhibiting akt1 translocation to the cellular membrane and activation. Contributes to p53/tp53-dependent apoptosis by repressing akt1 activity. Its direct transcription regulation by p53/tp53 may explain how p53/tp53 can negatively regulate akt1. May act as a tumor suppressor. The polypeptide is Pleckstrin homology-like domain family A member 3 (phlda3) (Danio rerio (Zebrafish)).